The chain runs to 641 residues: Homeobox protein ceh-38 (641 aa).

2 stretches are compositionally biased toward polar residues: residues 1–14 (MESS…TNGT) and 28–38 (DPSSTFINNTG). Disordered stretches follow at residues 1–79 (MESS…TSSA) and 129–244 (LHVD…GDRM). Positions 52–79 (TISPHPITPSASTSSATSATEEPATSSA) are enriched in low complexity. Positions 131–140 (VDSRRRESHD) are enriched in basic and acidic residues. 2 stretches are compositionally biased toward polar residues: residues 167-183 (TPTN…SSLL) and 190-204 (NTIG…TFGS). A DNA-binding region (CUT) is located at residues 308-394 (NAEIGDDIYI…TRLAILDMKT (87 aa)). Disordered stretches follow at residues 398–428 (NRAS…PVSK), 485–508 (GGNI…VGDT), and 552–641 (FGVS…LAAN). A DNA-binding region (homeobox) is located at residues 427–486 (SKRPRLVFTDIQKRTLQAIFKETQRPSREMQQTIAEHLRLDLSTVANFFMNARRRSRLGG). A compositionally biased stretch (acidic residues) spans 571–604 (HEDDEELDELNDSELAYEEDVEIGDEEEEDEEQA). A compositionally biased stretch (basic and acidic residues) spans 613-626 (KVEELEEKTVIKEE).

The protein belongs to the CUT homeobox family. Expressed in the embryo. After gastrulation, expressed in almost all cells. During larval and adult stages, expressed in the dorsal and ventral nerve cord, head and tail neurons, pharynx, gut and head.

Its subcellular location is the nucleus. In terms of biological role, probable DNA-binding regulatory protein involved in cell-fate specification. The sequence is that of Homeobox protein ceh-38 (ceh-38) from Caenorhabditis elegans.